We begin with the raw amino-acid sequence, 106 residues long: Large ribosomal subunit protein bL21 (106 aa).

Belongs to the bacterial ribosomal protein bL21 family. As to quaternary structure, part of the 50S ribosomal subunit. Contacts protein L20.

Its function is as follows. This protein binds to 23S rRNA in the presence of protein L20. The sequence is that of Large ribosomal subunit protein bL21 from Xanthomonas campestris pv. campestris (strain ATCC 33913 / DSM 3586 / NCPPB 528 / LMG 568 / P 25).